We begin with the raw amino-acid sequence, 501 residues long: Glycerol kinase 1 (501 aa).

Residue threonine 16 coordinates ADP. ATP-binding residues include threonine 16, threonine 17, and serine 18. Threonine 16 contributes to the sn-glycerol 3-phosphate binding site. Arginine 20 lines the ADP pocket. 4 residues coordinate sn-glycerol 3-phosphate: arginine 84, glutamate 85, tyrosine 135, and aspartate 242. Residues arginine 84, glutamate 85, tyrosine 135, aspartate 242, and glutamine 243 each coordinate glycerol. ADP contacts are provided by threonine 264 and glycine 307. 4 residues coordinate ATP: threonine 264, glycine 307, glutamine 311, and glycine 408. Residue glycine 408 participates in ADP binding.

The protein belongs to the FGGY kinase family.

It catalyses the reaction glycerol + ATP = sn-glycerol 3-phosphate + ADP + H(+). It participates in polyol metabolism; glycerol degradation via glycerol kinase pathway; sn-glycerol 3-phosphate from glycerol: step 1/1. Key enzyme in the regulation of glycerol uptake and metabolism. Catalyzes the phosphorylation of glycerol to yield sn-glycerol 3-phosphate. The sequence is that of Glycerol kinase 1 from Saccharolobus solfataricus (strain ATCC 35092 / DSM 1617 / JCM 11322 / P2) (Sulfolobus solfataricus).